We begin with the raw amino-acid sequence, 872 residues long: Alanine--tRNA ligase (872 aa).

Residues His567, His571, Cys669, and His673 each contribute to the Zn(2+) site.

The protein belongs to the class-II aminoacyl-tRNA synthetase family. Requires Zn(2+) as cofactor.

The protein resides in the cytoplasm. It carries out the reaction tRNA(Ala) + L-alanine + ATP = L-alanyl-tRNA(Ala) + AMP + diphosphate. Functionally, catalyzes the attachment of alanine to tRNA(Ala) in a two-step reaction: alanine is first activated by ATP to form Ala-AMP and then transferred to the acceptor end of tRNA(Ala). Also edits incorrectly charged Ser-tRNA(Ala) and Gly-tRNA(Ala) via its editing domain. This is Alanine--tRNA ligase from Streptococcus pneumoniae (strain Hungary19A-6).